We begin with the raw amino-acid sequence, 205 residues long: Probable nicotinate-nucleotide adenylyltransferase (205 aa).

Belongs to the NadD family.

It catalyses the reaction nicotinate beta-D-ribonucleotide + ATP + H(+) = deamido-NAD(+) + diphosphate. It participates in cofactor biosynthesis; NAD(+) biosynthesis; deamido-NAD(+) from nicotinate D-ribonucleotide: step 1/1. Its function is as follows. Catalyzes the reversible adenylation of nicotinate mononucleotide (NaMN) to nicotinic acid adenine dinucleotide (NaAD). The sequence is that of Probable nicotinate-nucleotide adenylyltransferase from Arthrobacter sp. (strain FB24).